A 175-amino-acid polypeptide reads, in one-letter code: Regenerating islet-derived protein 3-alpha (175 aa).

A signal peptide spans 1-26; the sequence is MLPHLVLNSISWMLLSCLLFVFQVQG. A propeptide spanning residues 27 to 37 is cleaved from the precursor; sequence EDFQKEVPSPR. 3 cysteine pairs are disulfide-bonded: Cys-40–Cys-51, Cys-68–Cys-171, and Cys-146–Cys-163. One can recognise a C-type lectin domain in the interval 47–172; sequence YRSHCYALVM…CDGTLPFVCK (126 aa). Zn(2+)-binding residues include His-50, His-107, Glu-121, and His-145. The interval 103–118 is sufficient to activate EXTL3; sequence WIGLHDPTMGQQPNGG.

In terms of assembly, forms a hexameric membrane-permeabilizing oligomeric pore on membrane phospholipids. The hexamer is formed by three dimers related by helical symmetry. Forms filaments, filamentation traps pore complexes and limits damage to host cells. Interacts with EXTL3. In terms of processing, proteolytic processing by trypsin removes an inhibitory N-terminal propeptide and is essential for peptidoglycan binding and antibacterial activity. As to expression, small intestine and pancreas.

The protein resides in the secreted. In terms of biological role, bactericidal C-type lectin. The lack of the EPN motif may explain its inability to bind peptidoglycan. Its function is as follows. Acts as a hormone in response to different stimuli like anti-inflammatory signals, such as IL17A, or gut microbiome. Secreted by different cell types to activate its receptor EXTL3 and induce cell specific signaling pathways. Induced by IL17A in keratinocytes, regulates keratinocyte proliferation and differentiation after skin injury via activation of EXTL3-PI3K-AKT signaling pathway. In parallel, inhibits skin inflammation through the inhibition of inflammatory cytokines such as IL6 and TNF. In pancreas, is able to permealize beta-cells membrane and stimulate their proliferation. In Mus musculus (Mouse), this protein is Regenerating islet-derived protein 3-alpha (Reg3a).